Consider the following 1382-residue polypeptide: Hepatocyte growth factor receptor (1382 aa).

A signal peptide spans 1-24 (MKAPAVLAPGVLVLLFTLVRKSHG). Over 25–935 (ECEEALAKSK…VQPDQNFTGL (911 aa)) the chain is Extracellular. Positions 27–516 (EEALAKSKMN…TGKKITKIPL (490 aa)) constitute a Sema domain. N-linked (GlcNAc...) asparagine glycosylation is present at Asn-45. Cystine bridges form between Cys-95/Cys-101, Cys-98/Cys-160, Cys-133/Cys-141, and Cys-173/Cys-176. The N-linked (GlcNAc...) asparagine glycan is linked to Asn-106. 2 N-linked (GlcNAc...) asparagine glycosylation sites follow: Asn-203 and Asn-359. 2 disulfides stabilise this stretch: Cys-299-Cys-364 and Cys-386-Cys-398. 3 N-linked (GlcNAc...) asparagine glycosylation sites follow: Asn-400, Asn-406, and Asn-450. 4 cysteine pairs are disulfide-bonded: Cys-521–Cys-539, Cys-527–Cys-562, Cys-530–Cys-546, and Cys-542–Cys-552. IPT/TIG domains lie at 564–656 (PTIY…FSYV), 658–740 (PVIT…FSYQ), and 743–837 (PTVY…LIYV). O-linked (Man) threonine glycosylation is present at Thr-583. Asn-608 and Asn-636 each carry an N-linked (GlcNAc...) asparagine glycan. An O-linked (Man) threonine glycan is attached at Thr-677. N-linked (GlcNAc...) asparagine glycosylation is present at Asn-751. An O-linked (Man) threonine glycan is attached at Thr-762. Asn-786, Asn-880, and Asn-931 each carry an N-linked (GlcNAc...) asparagine glycan. The helical transmembrane segment at 936–956 (IVGVVSISIILLLLLGLFLWL) threads the bilayer. At 957–1382 (KKRKQIKDLG…QDSVDDEVDT (426 aa)) the chain is on the cytoplasmic side. At Ser-967 the chain carries Phosphoserine. Thr-978 is subject to Phosphothreonine. Ser-991, Ser-998, and Ser-1001 each carry phosphoserine. Tyr-1004 bears the Phosphotyrosine mark. Residues 1079–1346 (VHFNEVIGRG…RISAIFSTFI (268 aa)) form the Protein kinase domain. Residues 1085–1093 (IGRGHFGCV) and Lys-1111 contribute to the ATP site. Asp-1205 serves as the catalytic Proton acceptor. The tract at residues 1213–1382 (LDEKFTVKVA…QDSVDDEVDT (170 aa)) is interaction with RANBP9. Tyr-1231 is subject to Phosphotyrosine. Residues Tyr-1235 and Tyr-1236 each carry the phosphotyrosine; by autocatalysis modification. Thr-1290 carries the post-translational modification Phosphothreonine. The interaction with MUC20 stretch occupies residues 1321-1360 (WHPKAEMRPSFSELVSRISAIFSTFIGEHYVHVNTTYVNV). A phosphotyrosine; by autocatalysis mark is found at Tyr-1350 and Tyr-1357. Tyr-1366 carries the phosphotyrosine modification.

This sequence belongs to the protein kinase superfamily. Tyr protein kinase family. As to quaternary structure, heterodimer made of an alpha chain (50 kDa) and a beta chain (145 kDa) which are disulfide linked. Binds PLXNB1. Interacts when phosphorylated with downstream effectors including STAT3, PIK3R1, SRC, PCLG1, GRB2 and GAB1. Interacts with SPSB1, SPSB2 and SPSB4. Interacts with INPP5D/SHIP1. When phosphorylated at Tyr-1357, interacts with INPPL1/SHIP2. Interacts with RANBP9 and RANBP10, as well as SPSB1, SPSB2, SPSB3 and SPSB4. SPSB1 binding occurs in the presence and in the absence of HGF, however HGF treatment has a positive effect on this interaction. Interacts with MUC20; prevents interaction with GRB2 and suppresses hepatocyte growth factor-induced cell proliferation. Interacts with GRB10. Interacts with PTPN1 and PTPN2. Interacts with HSP90AA1 and HSP90AB1; the interaction suppresses MET kinase activity. Interacts with tensin TNS3. Interacts (when phosphorylated) with tensin TNS4 (via SH2 domain); the interaction increases MET protein stability by inhibiting MET endocytosis and subsequent lysosomal degradation. In terms of processing, autophosphorylated in response to ligand binding on Tyr-1235 and Tyr-1236 in the kinase domain leading to further phosphorylation of Tyr-1350 and Tyr-1357 in the C-terminal multifunctional docking site. Dephosphorylated by PTPRJ at Tyr-1350 and Tyr-1366. Dephosphorylated by PTPN1 and PTPN2. Post-translationally, ubiquitinated. Ubiquitination by CBL regulates the receptor stability and activity through proteasomal degradation. O-mannosylation of IPT/TIG domains by TMEM260 is required for protein maturation. O-mannosylated residues are composed of single mannose glycans that are not elongated or modified.

It is found in the membrane. It catalyses the reaction L-tyrosyl-[protein] + ATP = O-phospho-L-tyrosyl-[protein] + ADP + H(+). With respect to regulation, in its inactive state, the C-terminal tail interacts with the catalytic domain and inhibits the kinase activity. Upon ligand binding, the C-terminal tail is displaced and becomes phosphorylated, thus increasing the kinase activity. In terms of biological role, receptor tyrosine kinase that transduces signals from the extracellular matrix into the cytoplasm by binding to hepatocyte growth factor/HGF ligand. Regulates many physiological processes including proliferation, scattering, morphogenesis and survival. Ligand binding at the cell surface induces autophosphorylation of MET on its intracellular domain that provides docking sites for downstream signaling molecules. Following activation by ligand, interacts with the PI3-kinase subunit PIK3R1, PLCG1, SRC, GRB2, STAT3 or the adapter GAB1. Recruitment of these downstream effectors by MET leads to the activation of several signaling cascades including the RAS-ERK, PI3 kinase-AKT, or PLCgamma-PKC. The RAS-ERK activation is associated with the morphogenetic effects while PI3K/AKT coordinates prosurvival effects. During embryonic development, MET signaling plays a role in gastrulation, development and migration of muscles and neuronal precursors, angiogenesis and kidney formation. In adults, participates in wound healing as well as organ regeneration and tissue remodeling. Also promotes differentiation and proliferation of hematopoietic cells. The polypeptide is Hepatocyte growth factor receptor (MET) (Loxodonta africana (African elephant)).